Consider the following 459-residue polypeptide: Elongation factor 1-alpha 1 (459 aa).

The 238-residue stretch at 5 to 242 (KTHINIVVIG…DCIIPPQRPT (238 aa)) folds into the tr-type G domain. Residues 14 to 21 (GHVDSGKS) are G1. The interval 70–74 (GITID) is G2. Residues 91 to 94 (DAPG) form a G3 region. A G4 region spans residues 153–156 (NKMD). The G5 stretch occupies residues 194–196 (SGF). Residues Glu-301 and Glu-374 each carry the 5-glutamyl glycerylphosphorylethanolamine modification.

Belongs to the TRAFAC class translation factor GTPase superfamily. Classic translation factor GTPase family. EF-Tu/EF-1A subfamily.

Its subcellular location is the cytoplasm. This protein promotes the GTP-dependent binding of aminoacyl-tRNA to the A-site of ribosomes during protein biosynthesis. This Oscheius tipulae protein is Elongation factor 1-alpha 1 (eft-1).